The primary structure comprises 227 residues: Ion-translocating oxidoreductase complex subunit E (227 aa).

6 helical membrane passes run 18–38 (ALVQ…VTNA), 39–59 (LGLG…VSLV), 69–89 (IPVF…LMNA), 93–113 (GLYL…IIIG), 125–145 (LPAV…LVLL), and 182–202 (HFLL…LIAL).

The protein belongs to the NqrDE/RnfAE family. In terms of assembly, the complex is composed of six subunits: RnfA, RnfB, RnfC, RnfD, RnfE and RnfG.

It localises to the cell inner membrane. Its function is as follows. Part of a membrane-bound complex that couples electron transfer with translocation of ions across the membrane. The sequence is that of Ion-translocating oxidoreductase complex subunit E from Aliivibrio fischeri (strain ATCC 700601 / ES114) (Vibrio fischeri).